The following is a 536-amino-acid chain: Apolipoprotein N-acyltransferase (536 aa).

Transmembrane regions (helical) follow at residues I10–G30, A42–A62, W76–V96, A107–A127, L136–G158, I181–I201, and A212–L232. The CN hydrolase domain maps to M248–A501. Residue E295 is the Proton acceptor of the active site. Residue K360 is part of the active site. The active-site Nucleophile is the C413. The helical transmembrane segment at A509–L529 threads the bilayer.

The protein belongs to the CN hydrolase family. Apolipoprotein N-acyltransferase subfamily.

The protein resides in the cell inner membrane. It catalyses the reaction N-terminal S-1,2-diacyl-sn-glyceryl-L-cysteinyl-[lipoprotein] + a glycerophospholipid = N-acyl-S-1,2-diacyl-sn-glyceryl-L-cysteinyl-[lipoprotein] + a 2-acyl-sn-glycero-3-phospholipid + H(+). It participates in protein modification; lipoprotein biosynthesis (N-acyl transfer). Functionally, catalyzes the phospholipid dependent N-acylation of the N-terminal cysteine of apolipoprotein, the last step in lipoprotein maturation. The chain is Apolipoprotein N-acyltransferase from Rhodopseudomonas palustris (strain ATCC BAA-98 / CGA009).